A 75-amino-acid polypeptide reads, in one-letter code: Small ribosomal subunit protein bS18 (75 aa).

It belongs to the bacterial ribosomal protein bS18 family. As to quaternary structure, part of the 30S ribosomal subunit. Forms a tight heterodimer with protein bS6.

Binds as a heterodimer with protein bS6 to the central domain of the 16S rRNA, where it helps stabilize the platform of the 30S subunit. This Shewanella loihica (strain ATCC BAA-1088 / PV-4) protein is Small ribosomal subunit protein bS18.